Consider the following 422-residue polypeptide: Protein FAM53B (422 aa).

Residues S119, S168, S170, S180, S213, and S269 each carry the phosphoserine modification. 2 disordered regions span residues 193–225 (GQPC…GRLD) and 243–269 (CPPS…RSRS). Over residues 244–269 (PPSANSTPASTPELARRSSGLARSRS) the composition is skewed to low complexity. The Nuclear localization signal signature appears at 282–285 (KRRR). A phosphoserine mark is found at S335 and S344.

This sequence belongs to the FAM53 family. Interacts with CTNNB1.

It is found in the nucleus. In terms of biological role, acts as a regulator of Wnt signaling pathway by regulating beta-catenin (CTNNB1) nuclear localization. The protein is Protein FAM53B of Mus musculus (Mouse).